Consider the following 200-residue polypeptide: Kunitz type trypsin inhibitor 111 (200 aa).

The N-terminal stretch at 1–24 (MSTISFTIFILANVWLLVVTTSIA) is a signal peptide. 3 disulfide bridges follow: cysteine 62–cysteine 108, cysteine 160–cysteine 172, and cysteine 165–cysteine 168.

It belongs to the protease inhibitor I3 (leguminous Kunitz-type inhibitor) family. In terms of assembly, interacts with SCP1.

Its subcellular location is the secreted. The protein localises to the extracellular space. It localises to the apoplast. The sequence is that of Kunitz type trypsin inhibitor 111 (KPI111) from Medicago truncatula (Barrel medic).